Here is a 172-residue protein sequence, read N- to C-terminus: Small ribosomal subunit protein uS5 (172 aa).

In terms of domain architecture, S5 DRBM spans 16–79 (LKDRLVAINR…ESAKKNLVKV (64 aa)).

It belongs to the universal ribosomal protein uS5 family. As to quaternary structure, part of the 30S ribosomal subunit. Contacts proteins S4 and S8.

Functionally, with S4 and S12 plays an important role in translational accuracy. Located at the back of the 30S subunit body where it stabilizes the conformation of the head with respect to the body. This is Small ribosomal subunit protein uS5 from Bacteroides thetaiotaomicron (strain ATCC 29148 / DSM 2079 / JCM 5827 / CCUG 10774 / NCTC 10582 / VPI-5482 / E50).